The following is a 418-amino-acid chain: Nisin biosynthesis protein NisC (418 aa).

To B.subtilis SpaC and S.epidermidis EpiC.

In terms of biological role, could be implicated in the processing or the export process of the nisin lantibiotic. The polypeptide is Nisin biosynthesis protein NisC (nisC) (Lactococcus lactis subsp. lactis (Streptococcus lactis)).